Here is a 161-residue protein sequence, read N- to C-terminus: Phosphopantetheine adenylyltransferase (161 aa).

Ser-9 contributes to the substrate binding site. ATP is bound by residues 9–10 and His-17; that span reads SF. Substrate-binding residues include Lys-41, Leu-73, and Lys-87. ATP is bound by residues 88-90, Glu-98, and 123-129; these read GLR and YSYLSSS.

It belongs to the bacterial CoaD family. As to quaternary structure, homohexamer. It depends on Mg(2+) as a cofactor.

The protein localises to the cytoplasm. It carries out the reaction (R)-4'-phosphopantetheine + ATP + H(+) = 3'-dephospho-CoA + diphosphate. The protein operates within cofactor biosynthesis; coenzyme A biosynthesis; CoA from (R)-pantothenate: step 4/5. Its function is as follows. Reversibly transfers an adenylyl group from ATP to 4'-phosphopantetheine, yielding dephospho-CoA (dPCoA) and pyrophosphate. This chain is Phosphopantetheine adenylyltransferase, found in Clostridium novyi (strain NT).